The following is a 675-amino-acid chain: Methionine--tRNA ligase (675 aa).

Residues 15-25 carry the 'HIGH' region motif; that stretch reads PYANGSIHLGH. Residues C146, C149, C159, and C162 each contribute to the Zn(2+) site. Residues 332-336 carry the 'KMSKS' region motif; sequence KMSKS. Residue K335 participates in ATP binding. One can recognise a tRNA-binding domain in the interval 573–675; the sequence is DFAKVDMRIA…SGAQPGMQVK (103 aa).

The protein belongs to the class-I aminoacyl-tRNA synthetase family. MetG type 1 subfamily. Homodimer. Zn(2+) is required as a cofactor.

It is found in the cytoplasm. The enzyme catalyses tRNA(Met) + L-methionine + ATP = L-methionyl-tRNA(Met) + AMP + diphosphate. Its function is as follows. Is required not only for elongation of protein synthesis but also for the initiation of all mRNA translation through initiator tRNA(fMet) aminoacylation. The sequence is that of Methionine--tRNA ligase from Serratia proteamaculans (strain 568).